We begin with the raw amino-acid sequence, 196 residues long: Nucleoside triphosphate pyrophosphatase (196 aa).

D72 functions as the Proton acceptor in the catalytic mechanism.

The protein belongs to the Maf family. The cofactor is a divalent metal cation.

The protein resides in the cytoplasm. The enzyme catalyses a ribonucleoside 5'-triphosphate + H2O = a ribonucleoside 5'-phosphate + diphosphate + H(+). The catalysed reaction is a 2'-deoxyribonucleoside 5'-triphosphate + H2O = a 2'-deoxyribonucleoside 5'-phosphate + diphosphate + H(+). In terms of biological role, nucleoside triphosphate pyrophosphatase. May have a dual role in cell division arrest and in preventing the incorporation of modified nucleotides into cellular nucleic acids. In Chlamydia muridarum (strain MoPn / Nigg), this protein is Nucleoside triphosphate pyrophosphatase.